The following is a 366-amino-acid chain: Chorismate synthase (366 aa).

An NADP(+)-binding site is contributed by Arg48. Residues 131–133 (RAS), 243–244 (NA), Gly288, 303–307 (KPTSS), and Arg329 contribute to the FMN site.

This sequence belongs to the chorismate synthase family. In terms of assembly, homotetramer. It depends on FMNH2 as a cofactor.

It carries out the reaction 5-O-(1-carboxyvinyl)-3-phosphoshikimate = chorismate + phosphate. It participates in metabolic intermediate biosynthesis; chorismate biosynthesis; chorismate from D-erythrose 4-phosphate and phosphoenolpyruvate: step 7/7. Catalyzes the anti-1,4-elimination of the C-3 phosphate and the C-6 proR hydrogen from 5-enolpyruvylshikimate-3-phosphate (EPSP) to yield chorismate, which is the branch point compound that serves as the starting substrate for the three terminal pathways of aromatic amino acid biosynthesis. This reaction introduces a second double bond into the aromatic ring system. This is Chorismate synthase from Bartonella henselae (strain ATCC 49882 / DSM 28221 / CCUG 30454 / Houston 1) (Rochalimaea henselae).